A 241-amino-acid chain; its full sequence is ATP synthase subunit a (241 aa).

Helical transmembrane passes span 29–49, 54–74, 86–106, 114–134, 153–173, 177–197, 200–220, and 221–241; these read NSSF…LFGI, VIPG…ISII, IPLI…GVLP, HVIV…IVGF, WLAP…PVSL, LAAN…FIVN, IFFT…EVFV, and AILQ…DAVK.

It belongs to the ATPase A chain family. F-type ATPases have 2 components, CF(1) - the catalytic core - and CF(0) - the membrane proton channel. CF(1) has five subunits: alpha(3), beta(3), gamma(1), delta(1), epsilon(1). CF(0) has three main subunits: a(1), b(2) and c(9-12). The alpha and beta chains form an alternating ring which encloses part of the gamma chain. CF(1) is attached to CF(0) by a central stalk formed by the gamma and epsilon chains, while a peripheral stalk is formed by the delta and b chains.

The protein resides in the cell membrane. Functionally, key component of the proton channel; it plays a direct role in the translocation of protons across the membrane. This is ATP synthase subunit a from Wolbachia pipientis wMel.